Consider the following 515-residue polypeptide: Monocarboxylate transporter 10 (515 aa).

Residues Met-1–Val-48 form a disordered region. The Cytoplasmic segment spans residues Met-1 to Glu-66. The segment covering Ala-17–Gly-26 has biased composition (low complexity). Residues Ala-27–Ser-36 are compositionally biased toward pro residues. Residues Gly-67–Ile-87 form a helical membrane-spanning segment. Over Gln-88–Thr-114 the chain is Extracellular. Residues Ala-115–Phe-135 form a helical membrane-spanning segment. The Cytoplasmic portion of the chain corresponds to Thr-136 to Thr-144. A helical transmembrane segment spans residues Ala-145–Ile-165. Over Glu-166–Thr-171 the chain is Extracellular. A helical membrane pass occupies residues Tyr-172 to Gly-192. Topologically, residues His-193–Gly-200 are cytoplasmic. The helical transmembrane segment at Leu-201 to Leu-221 threads the bilayer. Residues Arg-222 to Val-228 lie on the Extracellular side of the membrane. A helical membrane pass occupies residues Gly-229 to Phe-249. Over Thr-250–Thr-291 the chain is Cytoplasmic. Ser-263 is subject to Phosphoserine. Residues Ala-292–Val-312 form a helical membrane-spanning segment. Over His-313 to Glu-329 the chain is Extracellular. The helical transmembrane segment at Val-330–Ala-350 threads the bilayer. A topological domain (cytoplasmic) is located at residue Asp-351. Residues Tyr-352 to Met-372 traverse the membrane as a helical segment. At Ser-373 to Asp-396 the chain is on the extracellular side. Residues Gly-397–Ser-417 traverse the membrane as a helical segment. Residues Gln-418–Ala-419 are Cytoplasmic-facing. Residues Ile-420–Leu-440 form a helical membrane-spanning segment. Residues Leu-441–Ala-451 are Extracellular-facing. Residues Phe-452–Ile-472 form a helical membrane-spanning segment. Topologically, residues His-473–Ile-515 are cytoplasmic. Phosphoserine occurs at positions 498, 501, 503, and 504.

The protein belongs to the major facilitator superfamily. Monocarboxylate porter (TC 2.A.1.13) family. In terms of processing, not N-glycosylated. As to expression, strongly expressed in kidney and skeletal muscle and at lower level in placenta and heart.

The protein resides in the cell membrane. It localises to the basolateral cell membrane. The enzyme catalyses 3,3',5-triiodo-L-thyronine(out) = 3,3',5-triiodo-L-thyronine(in). It carries out the reaction L-thyroxine(out) = L-thyroxine(in). The catalysed reaction is L-tryptophan(in) = L-tryptophan(out). It catalyses the reaction L-tyrosine(in) = L-tyrosine(out). The enzyme catalyses L-phenylalanine(in) = L-phenylalanine(out). Functionally, sodium- and proton-independent thyroid hormones and aromatic acids transporter. Mediates both uptake and efflux of 3,5,3'-triiodothyronine (T3) and 3,5,3',5'-tetraiodothyronine (T4) with high affinity, suggesting a role in the homeostasis of thyroid hormone levels. Responsible for low affinity bidirectional transport of the aromatic amino acids, such as phenylalanine, tyrosine, tryptophan and L-3,4-dihydroxyphenylalanine (L-dopa). Plays an important role in homeostasis of aromatic amino acids. This chain is Monocarboxylate transporter 10 (SLC16A10), found in Homo sapiens (Human).